The following is a 140-amino-acid chain: Large ribosomal subunit protein uL22 (140 aa).

Belongs to the universal ribosomal protein uL22 family. As to quaternary structure, part of the 50S ribosomal subunit.

In terms of biological role, this protein binds specifically to 23S rRNA; its binding is stimulated by other ribosomal proteins, e.g. L4, L17, and L20. It is important during the early stages of 50S assembly. It makes multiple contacts with different domains of the 23S rRNA in the assembled 50S subunit and ribosome. Its function is as follows. The globular domain of the protein is located near the polypeptide exit tunnel on the outside of the subunit, while an extended beta-hairpin is found that lines the wall of the exit tunnel in the center of the 70S ribosome. The sequence is that of Large ribosomal subunit protein uL22 from Parafrankia sp. (strain EAN1pec).